We begin with the raw amino-acid sequence, 1399 residues long: DNA-directed RNA polymerase subunit beta' (1399 aa).

Residues Cys-71, Cys-73, Cys-86, and Cys-89 each contribute to the Zn(2+) site. Asp-462, Asp-464, and Asp-466 together coordinate Mg(2+). 4 residues coordinate Zn(2+): Cys-810, Cys-884, Cys-891, and Cys-894.

This sequence belongs to the RNA polymerase beta' chain family. The RNAP catalytic core consists of 2 alpha, 1 beta, 1 beta' and 1 omega subunit. When a sigma factor is associated with the core the holoenzyme is formed, which can initiate transcription. It depends on Mg(2+) as a cofactor. Zn(2+) is required as a cofactor.

The catalysed reaction is RNA(n) + a ribonucleoside 5'-triphosphate = RNA(n+1) + diphosphate. Its function is as follows. DNA-dependent RNA polymerase catalyzes the transcription of DNA into RNA using the four ribonucleoside triphosphates as substrates. The chain is DNA-directed RNA polymerase subunit beta' from Chelativorans sp. (strain BNC1).